Here is a 330-residue protein sequence, read N- to C-terminus: MKKSLYIISDGELKRKDNTLYFETSEERKYIPVENTREILIFGEVSMNKRLLEFLTESEIIIHFFNYYGYYIGSFYPREHLNSGYMILKQAEHYLDTGKRLNLAEKFVSGAIENIKKVLIYYHNRGKELSEIISKIQEIATNIPDCSTTDELMAIEGNIRDYYYQSFDIILDNEHFIFETRTKRPPKNRINALISFANSLVYTTCLSEIYQTHLDPRIGYLHATNFRRFTLNLDVAEIFKPIIADRAIFSIVNKRIVKPQHFEKKLDGIVLNDKGKQILLQEMDERLRSTIQHKKLGRHVSYRQLIRLELYKIQKHLMEEEEYKPFVTGW.

Glutamate 156, histidine 222, and glutamate 237 together coordinate Mn(2+).

This sequence belongs to the CRISPR-associated endonuclease Cas1 family. As to quaternary structure, homodimer, forms a heterotetramer with a Cas2 homodimer. The cofactor is Mg(2+). Requires Mn(2+) as cofactor.

In terms of biological role, CRISPR (clustered regularly interspaced short palindromic repeat), is an adaptive immune system that provides protection against mobile genetic elements (viruses, transposable elements and conjugative plasmids). CRISPR clusters contain spacers, sequences complementary to antecedent mobile elements, and target invading nucleic acids. CRISPR clusters are transcribed and processed into CRISPR RNA (crRNA). Acts as a dsDNA endonuclease. Involved in the integration of spacer DNA into the CRISPR cassette. This Thermodesulfovibrio yellowstonii (strain ATCC 51303 / DSM 11347 / YP87) protein is CRISPR-associated endonuclease Cas1 2.